Reading from the N-terminus, the 152-residue chain is Sec-independent protein translocase protein TatB (152 aa).

The chain crosses the membrane as a helical span at residues 1-21 (MFDVAPSELLLVAVVALVVIG). Residues 60–71 (EDMEKRWAEENA) are compositionally biased toward basic and acidic residues. The segment at 60 to 152 (EDMEKRWAEE…KEADQQEKQS (93 aa)) is disordered. Composition is skewed to low complexity over residues 84 to 98 (TAST…PVSD) and 124 to 140 (AANH…STPA). Basic and acidic residues predominate over residues 141 to 152 (KPKEADQQEKQS).

The protein belongs to the TatB family. The Tat system comprises two distinct complexes: a TatABC complex, containing multiple copies of TatA, TatB and TatC subunits, and a separate TatA complex, containing only TatA subunits. Substrates initially bind to the TatABC complex, which probably triggers association of the separate TatA complex to form the active translocon.

The protein resides in the cell inner membrane. Its function is as follows. Part of the twin-arginine translocation (Tat) system that transports large folded proteins containing a characteristic twin-arginine motif in their signal peptide across membranes. Together with TatC, TatB is part of a receptor directly interacting with Tat signal peptides. TatB may form an oligomeric binding site that transiently accommodates folded Tat precursor proteins before their translocation. The chain is Sec-independent protein translocase protein TatB from Zymomonas mobilis subsp. mobilis (strain ATCC 31821 / ZM4 / CP4).